The chain runs to 143 residues: ATP synthase subunit b', chloroplastic (143 aa).

Residues 12-31 (LPVMGLQVVLLSWLLEQILY) traverse the membrane as a helical segment.

It belongs to the ATPase B chain family. F-type ATPases have 2 components, F(1) - the catalytic core - and F(0) - the membrane proton channel. F(1) has five subunits: alpha(3), beta(3), gamma(1), delta(1), epsilon(1). F(0) has four main subunits: a(1), b(1), b'(1) and c(10-14). The alpha and beta chains form an alternating ring which encloses part of the gamma chain. F(1) is attached to F(0) by a central stalk formed by the gamma and epsilon chains, while a peripheral stalk is formed by the delta, b and b' chains.

The protein resides in the plastid. It is found in the chloroplast thylakoid membrane. Functionally, f(1)F(0) ATP synthase produces ATP from ADP in the presence of a proton or sodium gradient. F-type ATPases consist of two structural domains, F(1) containing the extramembraneous catalytic core and F(0) containing the membrane proton channel, linked together by a central stalk and a peripheral stalk. During catalysis, ATP synthesis in the catalytic domain of F(1) is coupled via a rotary mechanism of the central stalk subunits to proton translocation. Component of the F(0) channel, it forms part of the peripheral stalk, linking F(1) to F(0). The b'-subunit is a diverged and duplicated form of b found in plants and photosynthetic bacteria. This Cyanidioschyzon merolae (strain NIES-3377 / 10D) (Unicellular red alga) protein is ATP synthase subunit b', chloroplastic.